The chain runs to 297 residues: tRNA pseudouridine synthase B (297 aa).

Catalysis depends on aspartate 39, which acts as the Nucleophile.

This sequence belongs to the pseudouridine synthase TruB family. Type 1 subfamily.

It catalyses the reaction uridine(55) in tRNA = pseudouridine(55) in tRNA. In terms of biological role, responsible for synthesis of pseudouridine from uracil-55 in the psi GC loop of transfer RNAs. The polypeptide is tRNA pseudouridine synthase B (Lactobacillus acidophilus (strain ATCC 700396 / NCK56 / N2 / NCFM)).